The following is a 201-amino-acid chain: Ras-related protein Rab-9A (201 aa).

A2 bears the N-acetylalanine mark. G17 contacts GDP. GTP is bound by residues G17, V18, G19, K20, S21, S22, T34, H38, and T39. Residues G19, K20, S21, and S22 each contribute to the GDP site. S21 serves as a coordination point for Mg(2+). The Switch 1 motif lies at 31 to 42 (KFDTQLFHTIGV). Residues T39 and D62 each contribute to the Mg(2+) site. Residues 64 to 78 (AGQERFRSLRTPFYR) carry the Switch 2 motif. The GTP site is built by G65, N124, K125, D127, A155, and K156. Residues N124, K125, D127, A155, and K156 each contribute to the GDP site. S179 carries the post-translational modification Phosphoserine. T187 carries the post-translational modification Phosphothreonine. Residues C200 and C201 are each lipidated (S-geranylgeranyl cysteine).

The protein belongs to the small GTPase superfamily. Rab family. In terms of assembly, interacts (preferentially in its GTP-bound form) with GCC2 (via its GRIP domain). Interacts (GTP-bound form) with SGSM1; the GDP-bound form has much lower affinity for SGSM1. Interacts with SGSM2. The GTP-bound form but not the GDP-bound form interacts with HPS4 and BLOC-3 complex (heterodimer of HPS1 and HPS4) but does not interact with HPS1 alone. Interacts (GTP-bound form) with NDE1; two RAB9A-GTP molecules lie on the opposite sides of the NDE1 homodimer; the interaction leads to RAB9A-dynein motor tethering. Interacts (GTP-bound form) with NDEL1. The cofactor is Mg(2+).

Its subcellular location is the cell membrane. The protein resides in the endoplasmic reticulum membrane. The protein localises to the golgi apparatus membrane. It localises to the late endosome. It is found in the cytoplasmic vesicle. Its subcellular location is the phagosome membrane. The protein resides in the phagosome. The protein localises to the cytoplasmic vesicle membrane. It localises to the melanosome. It catalyses the reaction GTP + H2O = GDP + phosphate + H(+). Regulated by guanine nucleotide exchange factors (GEFs) which promote the exchange of bound GDP for free GTP. Regulated by GTPase activating proteins (GAPs) which increase the GTP hydrolysis activity. Inhibited by GDP dissociation inhibitors (GDIs). Functionally, the small GTPases Rab are key regulators of intracellular membrane trafficking, from the formation of transport vesicles to their fusion with membranes. Rabs cycle between an inactive GDP-bound form and an active GTP-bound form that is able to recruit to membranes different sets of downstream effectors directly responsible for vesicle formation, movement, tethering and fusion. RAB9A is involved in the transport of proteins between the endosomes and the trans-Golgi network (TGN). Specifically uses NDE1/NDEL1 as an effector to interact with the dynein motor complex in order to control retrograde trafficking of RAB9-associated late endosomes to the TGN. Involved in the recruitment of SGSM2 to melanosomes and is required for the proper trafficking of melanogenic enzymes TYR, TYRP1 and DCT/TYRP2 to melanosomes in melanocytes. In Homo sapiens (Human), this protein is Ras-related protein Rab-9A.